The chain runs to 275 residues: Biotin synthase (275 aa).

A Radical SAM core domain is found at 1–217 (MLCAICNVSS…DTAKTLPQCR (217 aa)). [4Fe-4S] cluster is bound by residues cysteine 13, cysteine 17, and cysteine 20. Residues cysteine 57, cysteine 92, cysteine 150, and arginine 217 each contribute to the [2Fe-2S] cluster site.

It belongs to the radical SAM superfamily. Biotin synthase family. In terms of assembly, homodimer. [4Fe-4S] cluster serves as cofactor. [2Fe-2S] cluster is required as a cofactor.

It carries out the reaction (4R,5S)-dethiobiotin + (sulfur carrier)-SH + 2 reduced [2Fe-2S]-[ferredoxin] + 2 S-adenosyl-L-methionine = (sulfur carrier)-H + biotin + 2 5'-deoxyadenosine + 2 L-methionine + 2 oxidized [2Fe-2S]-[ferredoxin]. It functions in the pathway cofactor biosynthesis; biotin biosynthesis; biotin from 7,8-diaminononanoate: step 2/2. In terms of biological role, catalyzes the conversion of dethiobiotin (DTB) to biotin by the insertion of a sulfur atom into dethiobiotin via a radical-based mechanism. The sequence is that of Biotin synthase from Campylobacter fetus subsp. fetus (strain 82-40).